Reading from the N-terminus, the 97-residue chain is DNA-directed RNA polymerase subunit omega (97 aa).

The span at 1 to 16 (MSTPNALAAFNSSPSL) shows a compositional bias: polar residues. The disordered stretch occupies residues 1-21 (MSTPNALAAFNSSPSLNAPEG).

The protein belongs to the RNA polymerase subunit omega family. As to quaternary structure, the RNAP catalytic core consists of 2 alpha, 1 beta, 1 beta' and 1 omega subunit. When a sigma factor is associated with the core the holoenzyme is formed, which can initiate transcription.

It catalyses the reaction RNA(n) + a ribonucleoside 5'-triphosphate = RNA(n+1) + diphosphate. In terms of biological role, promotes RNA polymerase assembly. Latches the N- and C-terminal regions of the beta' subunit thereby facilitating its interaction with the beta and alpha subunits. This chain is DNA-directed RNA polymerase subunit omega, found in Saccharopolyspora erythraea (strain ATCC 11635 / DSM 40517 / JCM 4748 / NBRC 13426 / NCIMB 8594 / NRRL 2338).